A 259-amino-acid polypeptide reads, in one-letter code: V-type proton ATPase subunit D (259 aa).

The interval 214-259 is disordered; that stretch reads KLKEQEAAQRALEGPPKEEAGGTHSENQPPRNLLAVEEDNLPVLFN.

It belongs to the V-ATPase D subunit family. V-ATPase is a heteromultimeric enzyme made up of two complexes: the ATP-hydrolytic V1 complex and the proton translocation V0 complex. The V1 complex consists of three catalytic AB heterodimers that form a heterohexamer, three peripheral stalks each consisting of EG heterodimers, one central rotor including subunits D and F, and the regulatory subunits C and H. The proton translocation complex V0 consists of the proton transport subunit a, a ring of proteolipid subunits c9c'', rotary subunit d, and The proton translocation complex V0 consists of the proton transport subunit a, a ring of proteolipid subunits c9c'', rotary subunit d, subunits e and f, and the accessory subunits vah-19/Ac45 and vah-20/PRR.

Subunit of the V1 complex of vacuolar(H+)-ATPase (V-ATPase), a multisubunit enzyme composed of a peripheral complex (V1) that hydrolyzes ATP and a membrane integral complex (V0) that translocates protons. V-ATPase is responsible for acidifying and maintaining the pH of intracellular compartments and in some cell types, is targeted to the plasma membrane, where it is responsible for acidifying the extracellular environment. This chain is V-type proton ATPase subunit D, found in Caenorhabditis briggsae.